We begin with the raw amino-acid sequence, 243 residues long: 3-deoxy-manno-octulosonate cytidylyltransferase (243 aa).

It belongs to the KdsB family.

It localises to the cytoplasm. The enzyme catalyses 3-deoxy-alpha-D-manno-oct-2-ulosonate + CTP = CMP-3-deoxy-beta-D-manno-octulosonate + diphosphate. It participates in nucleotide-sugar biosynthesis; CMP-3-deoxy-D-manno-octulosonate biosynthesis; CMP-3-deoxy-D-manno-octulosonate from 3-deoxy-D-manno-octulosonate and CTP: step 1/1. Its pathway is bacterial outer membrane biogenesis; lipopolysaccharide biosynthesis. Functionally, activates KDO (a required 8-carbon sugar) for incorporation into bacterial lipopolysaccharide in Gram-negative bacteria. The polypeptide is 3-deoxy-manno-octulosonate cytidylyltransferase (Bartonella bacilliformis (strain ATCC 35685 / KC583 / Herrer 020/F12,63)).